Here is a 314-residue protein sequence, read N- to C-terminus: Tetraacyldisaccharide 4'-kinase (314 aa).

ATP is bound at residue 61–68; the sequence is IVGGSGKT.

Belongs to the LpxK family.

It catalyses the reaction a lipid A disaccharide + ATP = a lipid IVA + ADP + H(+). It functions in the pathway glycolipid biosynthesis; lipid IV(A) biosynthesis; lipid IV(A) from (3R)-3-hydroxytetradecanoyl-[acyl-carrier-protein] and UDP-N-acetyl-alpha-D-glucosamine: step 6/6. In terms of biological role, transfers the gamma-phosphate of ATP to the 4'-position of a tetraacyldisaccharide 1-phosphate intermediate (termed DS-1-P) to form tetraacyldisaccharide 1,4'-bis-phosphate (lipid IVA). In Aliarcobacter butzleri (strain RM4018) (Arcobacter butzleri), this protein is Tetraacyldisaccharide 4'-kinase.